The primary structure comprises 331 residues: Aldo-keto reductase family 7 member A3 (331 aa).

Ser-6 carries the phosphoserine modification. Residues Met-17, Asp-44, and Tyr-49 each coordinate NADPH. Tyr-49 functions as the Proton donor in the catalytic mechanism. Position 85 is a phosphoserine (Ser-85). His-113, Ser-143, Asn-144, Asn-198, Leu-200, Gly-202, Lys-208, Tyr-209, and Arg-222 together coordinate NADPH. Phosphothreonine is present on Thr-227. NADPH contacts are provided by Ser-290, Gln-294, and Asn-298.

This sequence belongs to the aldo/keto reductase family. Aldo/keto reductase 2 subfamily. As to quaternary structure, homodimer. As to expression, expressed in colon, kidney, liver, pancreas, adenocarcinoma and endometrium.

It localises to the cytoplasm. It carries out the reaction a primary alcohol + NADP(+) = an aldehyde + NADPH + H(+). The catalysed reaction is aflatoxin B1 dialdehyde + NADPH + H(+) = aflatoxin B1 C(6a)-monoaldehyde + NADP(+). It catalyses the reaction aflatoxin B1 dialdehyde + NADPH + H(+) = aflatoxin B1 C(8)-monoaldehyde + NADP(+). The enzyme catalyses aflatoxin B1 C(6a)-monoaldehyde + NADPH + 2 H(+) = aflatoxin B1 triol + NADP(+). With respect to regulation, inhibited by citrate. In terms of biological role, catalyzes the NADPH-dependent reduction of various carbonyl-containing compounds, including aldehydes, ketones, and toxic products from cellular metabolism or environmental exposure. Can reduce the dialdehyde form of aflatoxin B1 (AFB1) into alcohol derivatives, via monoaldehydes intermediates. Can reduce the dialdehyde form of aflatoxin B1 (AFB1) into alcohol derivatives, via monoaldehydes intermediates, thus preventing the formation of protein adducts that contribute to AFB1-induced toxicity. The protein is Aldo-keto reductase family 7 member A3 of Homo sapiens (Human).